A 237-amino-acid polypeptide reads, in one-letter code: Proteasome subunit beta (237 aa).

A disordered region spans residues 1-27 (MSKFPDLPGMKNLDANPYEPELASFDD). A propeptide spans 1-42 (MSKFPDLPGMKNLDANPYEPELASFDDMDADAGDGDAVAKTG) (removed in mature form; by autocatalysis). Catalysis depends on T43, which acts as the Nucleophile.

This sequence belongs to the peptidase T1B family. In terms of assembly, the 20S proteasome core is composed of 14 alpha and 14 beta subunits that assemble into four stacked heptameric rings, resulting in a barrel-shaped structure. The two inner rings, each composed of seven catalytic beta subunits, are sandwiched by two outer rings, each composed of seven alpha subunits. The catalytic chamber with the active sites is on the inside of the barrel. Has a gated structure, the ends of the cylinder being occluded by the N-termini of the alpha-subunits. Is capped at one or both ends by the proteasome regulatory ATPase, PAN.

The protein resides in the cytoplasm. The catalysed reaction is Cleavage of peptide bonds with very broad specificity.. Its activity is regulated as follows. The formation of the proteasomal ATPase PAN-20S proteasome complex, via the docking of the C-termini of PAN into the intersubunit pockets in the alpha-rings, triggers opening of the gate for substrate entry. Interconversion between the open-gate and close-gate conformations leads to a dynamic regulation of the 20S proteasome proteolysis activity. Component of the proteasome core, a large protease complex with broad specificity involved in protein degradation. The polypeptide is Proteasome subunit beta (Halomicrobium mukohataei (strain ATCC 700874 / DSM 12286 / JCM 9738 / NCIMB 13541) (Haloarcula mukohataei)).